The primary structure comprises 329 residues: 1-phosphatidylinositol phosphodiesterase (329 aa).

The first 31 residues, 1–31 (MSNKKLILKLFICSTIFITFVFALHDKRVVA), serve as a signal peptide directing secretion. The region spanning 51-194 (NIPLARISIP…ARGKIVLLKR (144 aa)) is the PI-PLC X-box domain. His-63 acts as the Proton acceptor in catalysis. Residue His-113 is the Proton donor of the active site.

It is found in the secreted. The enzyme catalyses a 1,2-diacyl-sn-glycero-3-phospho-(1D-myo-inositol) = 1D-myo-inositol 1,2-cyclic phosphate + a 1,2-diacyl-sn-glycerol. Cleaves glycosylphosphatidylinositol (GPI) and phosphatidylinositol (PI) anchors but not PI phosphates. The protein is 1-phosphatidylinositol phosphodiesterase of Bacillus thuringiensis.